The chain runs to 69 residues: Small cysteine-rich protein (69 aa).

Positions 1–19 (MKLQLCLVLLLLGVLYVQS) are cleaved as a signal peptide. Positions 20–22 (VPE) are excised as a propeptide.

It belongs to the Cnidaria small cysteine-rich protein (SCRiP) family. delta subfamily. Contains 4 disulfide bonds.

The protein localises to the secreted. It is found in the nematocyst. Induces neurotoxic symptoms on zebrafish. Has also been claimed to be implied in calcification, but this function seems improbable. The chain is Small cysteine-rich protein from Metridium senile (Brown sea anemone).